We begin with the raw amino-acid sequence, 132 residues long: Small ribosomal subunit protein uS8c (132 aa).

This sequence belongs to the universal ribosomal protein uS8 family. As to quaternary structure, part of the 30S ribosomal subunit.

The protein resides in the plastid. Its subcellular location is the chloroplast. Functionally, one of the primary rRNA binding proteins, it binds directly to 16S rRNA central domain where it helps coordinate assembly of the platform of the 30S subunit. In Platanus occidentalis (Sycamore), this protein is Small ribosomal subunit protein uS8c (rps8).